The chain runs to 491 residues: Nickel-binding protein NikA (491 aa).

Positions 1 to 18 (MKFKRLATIFSAVLVLSG) are cleaved as a signal peptide. C19 carries the N-palmitoyl cysteine lipid modification. A lipid anchor (S-diacylglycerol cysteine) is attached at C19.

The protein belongs to the bacterial solute-binding protein 5 family. In terms of assembly, the complex is composed of two ATP-binding proteins (NikD and NikE), two transmembrane proteins (NikB and NikC) and a solute-binding protein (NikA).

Its subcellular location is the cell membrane. Part of the ABC transporter complex NikABCDE (Opp2) involved in nickel import. Binds nickel and transfers it to the membrane-bound permease. Required for full urease activity and plays a significant role in the virulence of S.aureus during urinary tract infection (UTI). May bind nickel via a nickel-chelator. This chain is Nickel-binding protein NikA, found in Staphylococcus aureus (strain NCTC 8325 / PS 47).